A 287-amino-acid chain; its full sequence is Flagellin (287 aa).

It belongs to the bacterial flagellin family.

The protein resides in the secreted. The protein localises to the bacterial flagellum. Functionally, flagellin is the subunit protein which polymerizes to form the filaments of bacterial flagella. The chain is Flagellin (flaA) from Listeria monocytogenes serovar 1/2a (strain ATCC BAA-679 / EGD-e).